Here is a 98-residue protein sequence, read N- to C-terminus: NADH-ubiquinone oxidoreductase chain 4L (98 aa).

The next 3 membrane-spanning stretches (helical) occupy residues 1 to 21 (MPVV…GLLI), 29 to 49 (SLLC…VTVL), and 61 to 81 (IILL…LVMV).

This sequence belongs to the complex I subunit 4L family. Core subunit of respiratory chain NADH dehydrogenase (Complex I) which is composed of 45 different subunits.

It localises to the mitochondrion inner membrane. It carries out the reaction a ubiquinone + NADH + 5 H(+)(in) = a ubiquinol + NAD(+) + 4 H(+)(out). Functionally, core subunit of the mitochondrial membrane respiratory chain NADH dehydrogenase (Complex I) which catalyzes electron transfer from NADH through the respiratory chain, using ubiquinone as an electron acceptor. Part of the enzyme membrane arm which is embedded in the lipid bilayer and involved in proton translocation. The protein is NADH-ubiquinone oxidoreductase chain 4L (MT-ND4L) of Ursus americanus (American black bear).